Reading from the N-terminus, the 416-residue chain is Tyrosine--tRNA ligase (416 aa).

L-tyrosine is bound at residue tyrosine 40. Residues 45–54 (ATAASLHVGH) carry the 'HIGH' region motif. Positions 177 and 181 each coordinate L-tyrosine. The 'KMSKS' region motif lies at 237–241 (KMGKS). Residue lysine 240 participates in ATP binding. The 66-residue stretch at 351–416 (LSVTHFLVAA…RKKHKLVRLA (66 aa)) folds into the S4 RNA-binding domain.

The protein belongs to the class-I aminoacyl-tRNA synthetase family. TyrS type 1 subfamily. As to quaternary structure, homodimer.

It localises to the cytoplasm. It catalyses the reaction tRNA(Tyr) + L-tyrosine + ATP = L-tyrosyl-tRNA(Tyr) + AMP + diphosphate + H(+). Functionally, catalyzes the attachment of tyrosine to tRNA(Tyr) in a two-step reaction: tyrosine is first activated by ATP to form Tyr-AMP and then transferred to the acceptor end of tRNA(Tyr). The protein is Tyrosine--tRNA ligase of Cereibacter sphaeroides (strain ATCC 17025 / ATH 2.4.3) (Rhodobacter sphaeroides).